Consider the following 275-residue polypeptide: Holocytochrome c-type synthase (275 aa).

Disordered stretches follow at residues 1 to 59 and 83 to 102; these read MGLS…KTNS and KENL…PAPD. Glycine 2 is lipidated: N-myristoyl glycine. A compositionally biased stretch (polar residues) spans 9–28; sequence AASTVQTSTPAASDHQTAAP. HRM repeat units follow at residues 31–36 and 41–46; these read GCPMHE and GCPVSA. A compositionally biased stretch (polar residues) spans 48-59; that stretch reads PSDSTCGSKTNS. Residues 91-102 show a composition bias toward pro residues; the sequence is LMPPPNQTPAPD.

Belongs to the cytochrome c-type heme lyase family.

It localises to the mitochondrion inner membrane. The protein localises to the membrane. It catalyses the reaction holo-[cytochrome c] = apo-[cytochrome c] + heme b. Functionally, lyase that catalyzes the covalent linking of the heme group to the cytochrome C apoprotein to produce the mature functional cytochrome. This chain is Holocytochrome c-type synthase, found in Bos taurus (Bovine).